A 369-amino-acid chain; its full sequence is F-box protein At3g08750 (369 aa).

The F-box domain occupies 6–53 (CLLLPSLPFELIEEILYKIPAESLIRFKSTCKKWYNLITEKRFMYNHL).

The polypeptide is F-box protein At3g08750 (Arabidopsis thaliana (Mouse-ear cress)).